The primary structure comprises 426 residues: Enolase 1 (426 aa).

Gln162 provides a ligand contact to (2R)-2-phosphoglycerate. The active-site Proton donor is the Glu204. Residues Asp241, Glu284, and Asp311 each coordinate Mg(2+). (2R)-2-phosphoglycerate contacts are provided by Lys336, Arg365, Ser366, and Lys387. Lys336 (proton acceptor) is an active-site residue.

Belongs to the enolase family. Mg(2+) is required as a cofactor.

It is found in the cytoplasm. Its subcellular location is the secreted. The protein resides in the cell surface. The catalysed reaction is (2R)-2-phosphoglycerate = phosphoenolpyruvate + H2O. It participates in carbohydrate degradation; glycolysis; pyruvate from D-glyceraldehyde 3-phosphate: step 4/5. Catalyzes the reversible conversion of 2-phosphoglycerate (2-PG) into phosphoenolpyruvate (PEP). It is essential for the degradation of carbohydrates via glycolysis. In Methanospirillum hungatei JF-1 (strain ATCC 27890 / DSM 864 / NBRC 100397 / JF-1), this protein is Enolase 1.